The primary structure comprises 150 residues: Large ribosomal subunit protein bL9 (150 aa).

The protein belongs to the bacterial ribosomal protein bL9 family.

Functionally, binds to the 23S rRNA. This is Large ribosomal subunit protein bL9 from Limosilactobacillus reuteri (strain DSM 20016) (Lactobacillus reuteri).